We begin with the raw amino-acid sequence, 256 residues long: Thiazole synthase (256 aa).

The active-site Schiff-base intermediate with DXP is the K95. 1-deoxy-D-xylulose 5-phosphate contacts are provided by residues G156, 182–183 (AG), and 204–205 (NT).

The protein belongs to the ThiG family. As to quaternary structure, homotetramer. Forms heterodimers with either ThiH or ThiS.

Its subcellular location is the cytoplasm. It catalyses the reaction [ThiS sulfur-carrier protein]-C-terminal-Gly-aminoethanethioate + 2-iminoacetate + 1-deoxy-D-xylulose 5-phosphate = [ThiS sulfur-carrier protein]-C-terminal Gly-Gly + 2-[(2R,5Z)-2-carboxy-4-methylthiazol-5(2H)-ylidene]ethyl phosphate + 2 H2O + H(+). The protein operates within cofactor biosynthesis; thiamine diphosphate biosynthesis. Functionally, catalyzes the rearrangement of 1-deoxy-D-xylulose 5-phosphate (DXP) to produce the thiazole phosphate moiety of thiamine. Sulfur is provided by the thiocarboxylate moiety of the carrier protein ThiS. In vitro, sulfur can be provided by H(2)S. This Salmonella agona (strain SL483) protein is Thiazole synthase.